Consider the following 369-residue polypeptide: MSVSAIGFEGYEKRLEVSFFEPSLFVDTHGKGLRALPKSQIDEILAPAECTIVSSLSNDELDSYVLSESSLFIFPYKIIIKTCGTTKLLPSIEPLLRLAGELSLEVKSVRYTRGSFLCPGGQPFPHRNFSEEVSVLDGHFAKMGLSSVAYLMGDDDETKKWHVYSASAPARNGNGNNNNNVYTLEMCMTGLDKEKASVFYKNESSSAGSMTDNSGIRKILPQSQICDFEFEPCGYSMNSVEGDAISTIHVTPEDGFSYASFEAVGYDFTTMDLSHLVSKVLTCFEPKQFSVAVHSSVAQKSYDSGLSVDLEDYGCRETTIELLGEERGTVMYQSFEKLGRYCGSPRSTLKCEWSSSSSCTSEDEKEEGI.

Active-site residues include E9 and E12. S69 acts as the Schiff-base intermediate with substrate; via pyruvic acid in catalysis. S69 carries the post-translational modification Pyruvic acid (Ser); by autocatalysis. Catalysis depends on C83, which acts as the Proton donor; for catalytic activity. Residues S236 and H249 each act as proton acceptor; for processing activity in the active site.

This sequence belongs to the eukaryotic AdoMetDC family. Requires pyruvate as cofactor. Post-translationally, is synthesized initially as an inactive proenzyme. Formation of the active enzyme involves a self-maturation process in which the active site pyruvoyl group is generated from an internal serine residue via an autocatalytic post-translational modification. Two non-identical subunits are generated from the proenzyme in this reaction, and the pyruvate is formed at the N-terminus of the alpha chain, which is derived from the carboxyl end of the proenzyme. The post-translation cleavage follows an unusual pathway, termed non-hydrolytic serinolysis, in which the side chain hydroxyl group of the serine supplies its oxygen atom to form the C-terminus of the beta chain, while the remainder of the serine residue undergoes an oxidative deamination to produce ammonia and the pyruvoyl group blocking the N-terminus of the alpha chain.

It catalyses the reaction S-adenosyl-L-methionine + H(+) = S-adenosyl 3-(methylsulfanyl)propylamine + CO2. Its pathway is amine and polyamine biosynthesis; S-adenosylmethioninamine biosynthesis; S-adenosylmethioninamine from S-adenosyl-L-methionine: step 1/1. This is S-adenosylmethionine decarboxylase proenzyme 2 (SAMDC2) from Brassica juncea (Indian mustard).